Consider the following 289-residue polypeptide: MLLRGFSELLKCRGVMMKMRMKMSGDSSSLTLTEQQGGIRRIILNNPRKRNALSLQMLESLRENILTDADNPELHVIIISAVGPVFSSGHDLQELSSAEGSDLPRRVFHSCSELMMLIQDLPVPVIAMVNGVATAAGCQLVASCDVAVASEKSTFATPGVNVGLFCSTPAVAIGRTVPRKIAMQMLLTGRPLSAQQALQHGLLSAVFSEERLEDETLAIARRVCESSRPVVSLGKQIFNTQMSQSRDAAYSTAGAAMLDNLRLRDGQEGIRAFLEKRKPVWSNTDDCIH.

The N-terminal 14 residues, 1 to 14 (MLLRGFSELLKCRG), are a transit peptide targeting the mitochondrion.

It belongs to the enoyl-CoA hydratase/isomerase family.

The protein localises to the mitochondrion. Functionally, may play a role in fatty acid biosynthesis and insulin sensitivity. This Danio rerio (Zebrafish) protein is Enoyl-CoA hydratase domain-containing protein 3, mitochondrial (echdc3).